The chain runs to 162 residues: MLKITIIAACAENLCIGAGNAMPWHIPEDFAFFKVYTLGKPVIMGRKTWESLPVKPLPGRRNIVISRQADYCAAGAETVASLEVALALCAGAEEAVIMGGAQIYGQAMPLATDLRITEVDLSVEGDAFFPEIDRTHWREAERTERRVSSKGVAYTFVHYLGK.

In terms of domain architecture, DHFR spans 3–161 (KITIIAACAE…VAYTFVHYLG (159 aa)). Substrate is bound at residue 7–9 (IAA). Residues 8–9 (AA) and 16–21 (IGAGNA) each bind NADP(+). Position 29 (aspartate 29) interacts with substrate. 45 to 48 (GRKT) lines the NADP(+) pocket. Arginine 60 is a binding site for substrate. Residues 65–68 (ISRQ) and 98–103 (MGGAQI) contribute to the NADP(+) site. Threonine 117 serves as a coordination point for substrate.

The protein belongs to the dihydrofolate reductase family.

The catalysed reaction is (6S)-5,6,7,8-tetrahydrofolate + NADP(+) = 7,8-dihydrofolate + NADPH + H(+). The protein operates within cofactor biosynthesis; tetrahydrofolate biosynthesis; 5,6,7,8-tetrahydrofolate from 7,8-dihydrofolate: step 1/1. Its function is as follows. Key enzyme in folate metabolism. Catalyzes an essential reaction for de novo glycine and purine synthesis, and for DNA precursor synthesis. The chain is Dihydrofolate reductase (folA) from Neisseria gonorrhoeae.